Reading from the N-terminus, the 1456-residue chain is Ig-like and fibronectin type-III domain-containing protein C27B7.7 (1456 aa).

The signal sequence occupies residues 1 to 16; the sequence is MISLSLVLLLLFGVRC. Fibronectin type-III domains follow at residues 24–128 and 132–227; these read NDDS…SINT and IPKA…TNST. 5 N-linked (GlcNAc...) asparagine glycosylation sites follow: Asn-64, Asn-146, Asn-164, Asn-198, and Asn-225. The Ig-like 1 domain occupies 236–322; that stretch reads PDEEYTADPQ…DAGDSSKEVN (87 aa). Cys-254 and Cys-308 form a disulfide bridge. A Fibronectin type-III 3 domain is found at 328-426; that stretch reads PGSPPSEITL…VAMERDTQPI (99 aa). N-linked (GlcNAc...) asparagine glycosylation is found at Asn-471, Asn-497, and Asn-517. 3 consecutive Fibronectin type-III domains span residues 531-631, 636-736, and 737-846; these read APTQ…TLNG, PPDN…TAYS, and EVPI…WFRT. N-linked (GlcNAc...) asparagine glycosylation is found at Asn-658, Asn-691, and Asn-692. The 108-residue stretch at 841–948 folds into the Ig-like 2 domain; it reads PRWFRTGHGK…GSSSASVEIR (108 aa). A disulfide bridge links Cys-877 with Cys-932. Asn-893, Asn-898, Asn-969, Asn-1091, Asn-1120, Asn-1133, Asn-1151, Asn-1207, Asn-1268, Asn-1277, Asn-1298, Asn-1350, Asn-1357, and Asn-1382 each carry an N-linked (GlcNAc...) asparagine glycan. In terms of domain architecture, Fibronectin type-III 7 spans 955 to 1050; it reads PPENIILTAY…SCISDVLYET (96 aa). 3 Fibronectin type-III domains span residues 1148-1234, 1236-1343, and 1347-1438; these read APTN…TPNG, PKTA…ISFD, and VIDN…SSPS. The disordered stretch occupies residues 1419–1456; it reads LGRESPPSEEIDLEFISSPSPTPIISGSRRKVIKEPPL. Over residues 1434–1445 the composition is skewed to low complexity; it reads ISSPSPTPIISG.

It localises to the secreted. The chain is Ig-like and fibronectin type-III domain-containing protein C27B7.7 from Caenorhabditis elegans.